Consider the following 328-residue polypeptide: Nucleotide-binding protein BLD_0430 (328 aa).

The tract at residues 1-35 is disordered; sequence MNQQTTNRDTGEAAATNAPANSATSTSTPDNQPTP. A compositionally biased stretch (low complexity) spans 13-29; the sequence is AAATNAPANSATSTSTP. Residue 46–53 coordinates ATP; the sequence is GMSGAGRS. 101–104 is a GTP binding site; it reads DVRS.

This sequence belongs to the RapZ-like family.

Functionally, displays ATPase and GTPase activities. The sequence is that of Nucleotide-binding protein BLD_0430 from Bifidobacterium longum (strain DJO10A).